The primary structure comprises 754 residues: 5-methyltetrahydropteroyltriglutamate--homocysteine methyltransferase (754 aa).

5-methyltetrahydropteroyltri-L-glutamate is bound by residues 19 to 22 (RELK) and Lys121. Residues 423–425 (IGS) and Glu476 contribute to the L-homocysteine site. Residues 423 to 425 (IGS) and Glu476 contribute to the L-methionine site. 5-methyltetrahydropteroyltri-L-glutamate-binding positions include 507–508 (RC) and Trp553. Asp591 contacts L-homocysteine. Residue Asp591 participates in L-methionine binding. A 5-methyltetrahydropteroyltri-L-glutamate-binding site is contributed by Glu597. 3 residues coordinate Zn(2+): His633, Cys635, and Glu657. His686 serves as the catalytic Proton donor. Cys718 serves as a coordination point for Zn(2+).

It belongs to the vitamin-B12 independent methionine synthase family. The cofactor is Zn(2+).

It carries out the reaction 5-methyltetrahydropteroyltri-L-glutamate + L-homocysteine = tetrahydropteroyltri-L-glutamate + L-methionine. Its pathway is amino-acid biosynthesis; L-methionine biosynthesis via de novo pathway; L-methionine from L-homocysteine (MetE route): step 1/1. Catalyzes the transfer of a methyl group from 5-methyltetrahydrofolate to homocysteine resulting in methionine formation. The chain is 5-methyltetrahydropteroyltriglutamate--homocysteine methyltransferase from Corynebacterium efficiens (strain DSM 44549 / YS-314 / AJ 12310 / JCM 11189 / NBRC 100395).